We begin with the raw amino-acid sequence, 973 residues long: Sensor histidine kinase TmoS (973 aa).

Residues 32-103 form the PAS 1 domain; that stretch reads REELARIIFD…NQKRLVEAAS (72 aa). One can recognise a PAC 1 domain in the interval 108-162; the sequence is VRCDIEILGKSGGREVIAVDFSLLPIRDEQENIVFLLAEGRNITDKKKAEAMLAL. Residues 187 to 405 form the Histidine kinase 1 domain; sequence KVSHELRTPL…LFQVKLPLNA (219 aa). Phosphohistidine; by autocatalysis is present on His190. Residues 452 to 567 enclose the Response regulatory domain; the sequence is RVLIVEDNPD…ELRARVSNLI (116 aa). Residue Asp500 is modified to 4-aspartylphosphate. In terms of domain architecture, PAS 2 spans 611-681; that stretch reads SEARWKAVYE…QRLARLLQSG (71 aa). The PAC 2 domain occupies 685–737; sequence YSVECSYLCKNGSTIWANASVSLMSPRVDEPQVILQIIDDITEKKQAQETLNQ. The region spanning 757–973 is the Histidine kinase 2 domain; sequence YIAHEINQPL…ACFFVSIPVS (217 aa). His760 carries the post-translational modification Phosphohistidine.

Autophosphorylated. Activation requires a sequential transfer of a phosphate group from a His in the primary transmitter domain, to an Asp in the receiver domain and to a His in the secondary transmitter domain.

The protein resides in the cytoplasm. It catalyses the reaction ATP + protein L-histidine = ADP + protein N-phospho-L-histidine.. Activity is regulated by agonists and antagonists. Binding of agonists such as toluene or benzene to TmoS stimulates autophosphorylation. Toluene causes the most pronounced increase, followed by benzene, chlorobenzene and ethylbenzene. Activity is inhibited by antagonists such as o-xylene, o-chlorotoluene and trimethylbenzene isomers, which bind to TmoS but do not stimulate autophosphorylation. In terms of biological role, member of the two-component regulatory system TmoS/TmoT involved in the regulation of toluene degradation. Probably phosphorylates TmoT via a four-step phosphorelay in response to toluene. Can also be induced by benzene and ethylbenzene. The polypeptide is Sensor histidine kinase TmoS (tmoS) (Ectopseudomonas mendocina (Pseudomonas mendocina)).